The chain runs to 158 residues: MAGFLDNFRWPECECIDWSERRNAVASVVAGILFFTGWWIMIDAAVVYPKPEQLNHAFHTCGVFSTLAFFMINAVSNAQVRGDSYESGCLGRTGARVWLFIGFMLMFGSLIASMWILFGAYVTQNTDVYPGLAVFFQNALIFFSTLIYKFGRTEELWT.

Residue Ala2 is modified to N-acetylalanine. The next 4 helical transmembrane spans lie at 28–48 (VVAG…AVVY), 56–76 (HAFH…NAVS), 98–118 (WLFI…WILF), and 128–148 (VYPG…TLIY).

Belongs to the UPF0220 family. As to quaternary structure, may form homotrimers or homodimers.

The protein resides in the endoplasmic reticulum membrane. It is found in the golgi apparatus membrane. The chain is Transmembrane protein 50B (TMEM50B) from Bos taurus (Bovine).